The chain runs to 178 residues: Large ribosomal subunit protein uL6 (178 aa).

The protein belongs to the universal ribosomal protein uL6 family. Part of the 50S ribosomal subunit.

In terms of biological role, this protein binds to the 23S rRNA, and is important in its secondary structure. It is located near the subunit interface in the base of the L7/L12 stalk, and near the tRNA binding site of the peptidyltransferase center. The polypeptide is Large ribosomal subunit protein uL6 (Staphylococcus epidermidis (strain ATCC 35984 / DSM 28319 / BCRC 17069 / CCUG 31568 / BM 3577 / RP62A)).